A 159-amino-acid polypeptide reads, in one-letter code: Probable cyclic pyranopterin monophosphate synthase (159 aa).

Residues 75–77 (LCH) and 111–112 (ME) contribute to the substrate site. Aspartate 126 is an active-site residue.

The protein belongs to the MoaC family. As to quaternary structure, homohexamer; trimer of dimers.

It carries out the reaction (8S)-3',8-cyclo-7,8-dihydroguanosine 5'-triphosphate = cyclic pyranopterin phosphate + diphosphate. The protein operates within cofactor biosynthesis; molybdopterin biosynthesis. In terms of biological role, catalyzes the conversion of (8S)-3',8-cyclo-7,8-dihydroguanosine 5'-triphosphate to cyclic pyranopterin monophosphate (cPMP). The sequence is that of Probable cyclic pyranopterin monophosphate synthase from Pyrococcus abyssi (strain GE5 / Orsay).